The sequence spans 231 residues: NADH-ubiquinone oxidoreductase chain 4 (231 aa).

The next 6 membrane-spanning stretches (helical) occupy residues 1-21 (PIAG…YGII), 34-54 (MFLP…LTCL), 63-85 (IAYS…TPWG), 89-111 (AMAL…NTTY), 128-148 (ILPM…ATPP), and 156-176 (LLIM…LGLS).

Belongs to the complex I subunit 4 family.

It is found in the mitochondrion membrane. It catalyses the reaction a ubiquinone + NADH + 5 H(+)(in) = a ubiquinol + NAD(+) + 4 H(+)(out). In terms of biological role, core subunit of the mitochondrial membrane respiratory chain NADH dehydrogenase (Complex I) that is believed to belong to the minimal assembly required for catalysis. Complex I functions in the transfer of electrons from NADH to the respiratory chain. The immediate electron acceptor for the enzyme is believed to be ubiquinone. The protein is NADH-ubiquinone oxidoreductase chain 4 (MT-ND4) of Trimeresurus stejnegeri (Chinese green tree viper).